The chain runs to 663 residues: DNA ligase (663 aa).

NAD(+) contacts are provided by residues 33 to 37 (DQEFD), 82 to 83 (SL), and E113. The N6-AMP-lysine intermediate role is filled by K115. R136, E170, K286, and K310 together coordinate NAD(+). Residues C404, C407, C422, and C427 each contribute to the Zn(2+) site. The BRCT domain occupies 587–663 (SSDPSLTGKL…IEESDLEDFL (77 aa)).

Belongs to the NAD-dependent DNA ligase family. LigA subfamily. Mg(2+) is required as a cofactor. The cofactor is Mn(2+).

The enzyme catalyses NAD(+) + (deoxyribonucleotide)n-3'-hydroxyl + 5'-phospho-(deoxyribonucleotide)m = (deoxyribonucleotide)n+m + AMP + beta-nicotinamide D-nucleotide.. Its function is as follows. DNA ligase that catalyzes the formation of phosphodiester linkages between 5'-phosphoryl and 3'-hydroxyl groups in double-stranded DNA using NAD as a coenzyme and as the energy source for the reaction. It is essential for DNA replication and repair of damaged DNA. The polypeptide is DNA ligase (Natranaerobius thermophilus (strain ATCC BAA-1301 / DSM 18059 / JW/NM-WN-LF)).